Reading from the N-terminus, the 260-residue chain is Homeobox protein CDX-1 (260 aa).

A DNA-binding region (homeobox) is located at residues 149 to 208 (KDKYRVVYTDHQRLELEKEFHYSRYITIRRKAELAAALGLTERQVKIWFQNRRAKERKVN). An interaction with DNA region spans residues 152-173 (YRVVYTDHQRLELEKEFHYSRY). An interaction with 5-mCpG DNA region spans residues 191–202 (RQVKIWFQNRRA). The disordered stretch occupies residues 204 to 260 (ERKVNKKKLQQQSQPTSTTTPTPPAVGTPGPMGTLCSGSAPSLVSSSPLTIKEEFMP). Composition is skewed to low complexity over residues 213 to 223 (QQQSQPTSTTT) and 240 to 252 (SGSA…SSPL).

Belongs to the Caudal homeobox family.

It is found in the nucleus. Functionally, plays a role in transcriptional regulation. Involved in activated KRAS-mediated transcriptional activation of PRKD1. Binds to the PRKD1 promoter. Could play a role in the terminal differentiation of the intestine. Binds preferentially to methylated DNA. This Gallus gallus (Chicken) protein is Homeobox protein CDX-1 (CDX1).